The sequence spans 452 residues: Probable phosphoglucosamine mutase (452 aa).

Residue S96 is the Phosphoserine intermediate of the active site. Residues S96, D233, D235, and D237 each contribute to the Mg(2+) site. A Phosphoserine modification is found at S96.

This sequence belongs to the phosphohexose mutase family. Requires Mg(2+) as cofactor. Activated by phosphorylation.

The enzyme catalyses alpha-D-glucosamine 1-phosphate = D-glucosamine 6-phosphate. Functionally, catalyzes the conversion of glucosamine-6-phosphate to glucosamine-1-phosphate. This Pyrococcus furiosus (strain ATCC 43587 / DSM 3638 / JCM 8422 / Vc1) protein is Probable phosphoglucosamine mutase.